Consider the following 124-residue polypeptide: Small ribosomal subunit protein uS12 (124 aa).

The disordered stretch occupies residues 1 to 22 (MATVNQLVRKPRKRKVAKSDVP). D89 carries the 3-methylthioaspartic acid modification. The disordered stretch occupies residues 99–124 (RGSLDTSGVQNRKQGRSKYGTKRPKK). Residues 111–124 (KQGRSKYGTKRPKK) are compositionally biased toward basic residues.

This sequence belongs to the universal ribosomal protein uS12 family. As to quaternary structure, part of the 30S ribosomal subunit. Contacts proteins S8 and S17. May interact with IF1 in the 30S initiation complex.

With S4 and S5 plays an important role in translational accuracy. Its function is as follows. Interacts with and stabilizes bases of the 16S rRNA that are involved in tRNA selection in the A site and with the mRNA backbone. Located at the interface of the 30S and 50S subunits, it traverses the body of the 30S subunit contacting proteins on the other side and probably holding the rRNA structure together. The combined cluster of proteins S8, S12 and S17 appears to hold together the shoulder and platform of the 30S subunit. The polypeptide is Small ribosomal subunit protein uS12 (Marinomonas sp. (strain MWYL1)).